Reading from the N-terminus, the 313-residue chain is Olfactory receptor 4Q3 (313 aa).

At 1 to 25 (MKKEQDSNVTEFVLLGLSSSWELQL) the chain is on the extracellular side. Asn8 carries N-linked (GlcNAc...) asparagine glycosylation. A helical transmembrane segment spans residues 26 to 49 (FLFLLFLFFYIAIVLGNLLIVVTV). The Cytoplasmic portion of the chain corresponds to 50-58 (QAHAHLLQS). A helical transmembrane segment spans residues 59 to 80 (PMYYFLGHLSFIDLCLSCVTVP). The Extracellular segment spans residues 81-101 (KMLGDFLQQGKSISFSGCLAQ). Cys98 and Cys190 are joined by a disulfide. A helical membrane pass occupies residues 102-121 (IYFLHFLGASEMFLLTVMAY). Over 122–140 (DRYVAICNPLRYLTVMNPQ) the chain is Cytoplasmic. A helical membrane pass occupies residues 141 to 159 (LCLWLVLACWCGGFIHSIM). Residues 160 to 196 (QVILVIQLPFCGPNELDNFYCDVPQVIKLACMDTYVV) are Extracellular-facing. A helical membrane pass occupies residues 197-220 (EVLVIANSGLLSLVCFLVLLFSYA). The Cytoplasmic segment spans residues 221–236 (IILITLRTHFCQGQNK). Residues 237–259 (VFSTCASHLTVVSLIFVPCVFIY) form a helical membrane-spanning segment. The Extracellular portion of the chain corresponds to 260 to 270 (LRPFCSFSVDK). The helical transmembrane segment at 271–290 (IFSLFYTVITPMLNPLIYTL) threads the bilayer. The Cytoplasmic portion of the chain corresponds to 291 to 313 (RNTDMKTAMKKLRIKPCGIPLPC).

Belongs to the G-protein coupled receptor 1 family.

It is found in the cell membrane. In terms of biological role, odorant receptor. The polypeptide is Olfactory receptor 4Q3 (OR4Q3) (Homo sapiens (Human)).